A 332-amino-acid chain; its full sequence is Fructose-1,6-bisphosphatase class 1 (332 aa).

The Mg(2+) site is built by E89, D110, L112, and D113. Residues 113–116 (DGSS), N206, Y239, 257–259 (YLY), and K269 each bind substrate. Mg(2+) is bound at residue E275.

It belongs to the FBPase class 1 family. As to quaternary structure, homotetramer. The cofactor is Mg(2+).

It is found in the cytoplasm. The catalysed reaction is beta-D-fructose 1,6-bisphosphate + H2O = beta-D-fructose 6-phosphate + phosphate. It participates in carbohydrate biosynthesis; gluconeogenesis. The chain is Fructose-1,6-bisphosphatase class 1 from Erwinia tasmaniensis (strain DSM 17950 / CFBP 7177 / CIP 109463 / NCPPB 4357 / Et1/99).